A 2555-amino-acid polypeptide reads, in one-letter code: Squalestatin hexaketide synthase clz14 (2555 aa).

The tract at residues 1–84 (MDVSKEAGHH…PNATSTTTTT (84 aa)) is disordered. Low complexity predominate over residues 10–84 (HANGFANGNT…PNATSTTTTT (75 aa)). The Ketosynthase family 3 (KS3) domain occupies 91-511 (QVPVAICGIG…GSNTHIIIDS (421 aa)). Active-site for beta-ketoacyl synthase activity residues include Cys261, His398, and His435. Residues 611–928 (FIFTGQGAQW…LEGIGKLFCF (318 aa)) form a malonyl-CoA:ACP transacylase (MAT) domain region. An N-terminal hotdog fold region spans residues 975 to 1104 (HELLGERSLE…GLVTASVVTS (130 aa)). The segment at 975-1256 (HELLGERSLE…RGFKCKKTDD (282 aa)) is dehydratase (DH) domain. The 286-residue stretch at 975-1260 (HELLGERSLE…CKKTDDAFIQ (286 aa)) folds into the PKS/mFAS DH domain. His1007 serves as the catalytic Proton acceptor; for dehydratase activity. A C-terminal hotdog fold region spans residues 1117-1260 (SRKVDTSRWY…CKKTDDAFIQ (144 aa)). The active-site Proton donor; for dehydratase activity is Asp1177. Residues 1424 to 1595 (SFFQAAGLNK…GFEGAGTVVL (172 aa)) are methyltransferase (CMet) domain. The enoyl reductase (ER) (ER) domain stretch occupies residues 1821–2141 (GMLNTLHWVG…RGVHMGRIVV (321 aa)). The tract at residues 2165-2338 (STYLLTGGMG…PASVIDIAAI (174 aa)) is ketoreductase (KR) domain. In terms of domain architecture, Carrier spans 2468 to 2546 (IIFAQEIAKR…SLGRLATKRL (79 aa)). O-(pantetheine 4'-phosphoryl)serine is present on Ser2505.

It functions in the pathway secondary metabolite biosynthesis. Its function is as follows. Highly reducing polyketide synthase (HR-PKS); part of the gene cluster that mediates the biosynthesis of squalestatin S1 (SQS1, also known as zaragozic acid A), a heavily oxidized fungal polyketide that offers potent cholesterol lowering activity by targeting squalene synthase (SS). SQS1 is composed of a 2,8-dioxobicyclic[3.2.1]octane-3,4,5-tricarboxyclic acid core that is connected to two lipophilic polyketide arms. These initial steps feature the priming of an unusual benzoic acid starter unit onto the highly reducing polyketide synthase clz14, followed by oxaloacetate extension and product release to generate a tricarboxylic acid containing product. The phenylalanine ammonia lyase (PAL) clz10 and the acyl-CoA ligase clz12 are involved in transforming phenylalanine into benzoyl-CoA. The citrate synthase-like protein clz17 is involved in connecting the C-alpha-carbons of the hexaketide chain and oxaloacetate to afford the tricarboxylic acid unit. The potential hydrolytic enzymes, clz11 and clz13, are in close proximity to pks2 and may participate in product release. On the other side, the tetraketide arm is synthesized by a the squalestatin tetraketide synthase clz2 and enzymatically esterified to the core in the last biosynthetic step, by the acetyltransferase clz6. The biosynthesis of the tetraketide must involve 3 rounds of chain extension. After the first and second rounds methyl-transfer occurs, and in all rounds of extension the ketoreductase and dehydratase are active. The enoyl reductase and C-MeT of clz2 are not active in the final round of extension. The acetyltransferase clz6 appears to have a broad substrate selectivity for its acyl CoA substrate, allowing the in vitro synthesis of novel squalestatins. The biosynthesis of SQS1 requires several oxidative steps likely performed by oxidoreductases clz3, clz15 and clz16. Finally, in support of the identification of the cluster as being responsible for SQS1 production, the cluster contains a gene encoding a putative squalene synthase (SS) clz20, suggesting a likely mechanism for self-resistance. This is Squalestatin hexaketide synthase clz14 from Cochliobolus lunatus (Filamentous fungus).